We begin with the raw amino-acid sequence, 466 residues long: Methylenetetrahydrofolate--tRNA-(uracil-5-)-methyltransferase TrmFO (466 aa).

14–19 (GGGLAG) is an FAD binding site.

The protein belongs to the MnmG family. TrmFO subfamily. FAD serves as cofactor.

It localises to the cytoplasm. It carries out the reaction uridine(54) in tRNA + (6R)-5,10-methylene-5,6,7,8-tetrahydrofolate + NADH + H(+) = 5-methyluridine(54) in tRNA + (6S)-5,6,7,8-tetrahydrofolate + NAD(+). The catalysed reaction is uridine(54) in tRNA + (6R)-5,10-methylene-5,6,7,8-tetrahydrofolate + NADPH + H(+) = 5-methyluridine(54) in tRNA + (6S)-5,6,7,8-tetrahydrofolate + NADP(+). Functionally, catalyzes the folate-dependent formation of 5-methyl-uridine at position 54 (M-5-U54) in all tRNAs. In Brucella abortus (strain 2308), this protein is Methylenetetrahydrofolate--tRNA-(uracil-5-)-methyltransferase TrmFO.